Here is a 66-residue protein sequence, read N- to C-terminus: Large ribosomal subunit protein eL24 (66 aa).

The Zn(2+) site is built by cysteine 6, cysteine 9, cysteine 32, and cysteine 36. The segment at 6–36 (CSFCGKTIEPGTGIMYVRKDGAILYFCSNKC) adopts a C4-type zinc-finger fold.

This sequence belongs to the eukaryotic ribosomal protein eL24 family. Part of the 50S ribosomal subunit. Forms a cluster with proteins L3 and L14. Zn(2+) is required as a cofactor.

Binds to the 23S rRNA. This chain is Large ribosomal subunit protein eL24, found in Thermoplasma volcanium (strain ATCC 51530 / DSM 4299 / JCM 9571 / NBRC 15438 / GSS1).